The chain runs to 425 residues: Serine--tRNA ligase (425 aa).

Residue 230–232 (TAE) participates in L-serine binding. 261-263 (RSE) is an ATP binding site. Glutamate 284 contributes to the L-serine binding site. 348-351 (EISS) serves as a coordination point for ATP. Serine 384 contacts L-serine.

The protein belongs to the class-II aminoacyl-tRNA synthetase family. Type-1 seryl-tRNA synthetase subfamily. As to quaternary structure, homodimer. The tRNA molecule binds across the dimer.

The protein resides in the cytoplasm. It carries out the reaction tRNA(Ser) + L-serine + ATP = L-seryl-tRNA(Ser) + AMP + diphosphate + H(+). The catalysed reaction is tRNA(Sec) + L-serine + ATP = L-seryl-tRNA(Sec) + AMP + diphosphate + H(+). It functions in the pathway aminoacyl-tRNA biosynthesis; selenocysteinyl-tRNA(Sec) biosynthesis; L-seryl-tRNA(Sec) from L-serine and tRNA(Sec): step 1/1. Functionally, catalyzes the attachment of serine to tRNA(Ser). Is also able to aminoacylate tRNA(Sec) with serine, to form the misacylated tRNA L-seryl-tRNA(Sec), which will be further converted into selenocysteinyl-tRNA(Sec). This Streptococcus pyogenes serotype M5 (strain Manfredo) protein is Serine--tRNA ligase.